Here is a 42-residue protein sequence, read N- to C-terminus: Photosystem I reaction center subunit IX (42 aa).

A helical transmembrane segment spans residues 7 to 27; it reads YLSVAPVLSTLWFGSLAGLLI.

The protein belongs to the PsaJ family.

It localises to the plastid. The protein localises to the chloroplast thylakoid membrane. Functionally, may help in the organization of the PsaE and PsaF subunits. In Lepidium virginicum (Virginia pepperweed), this protein is Photosystem I reaction center subunit IX.